A 756-amino-acid chain; its full sequence is Xylosyl- and glucuronyltransferase LARGE1 (756 aa).

Residues 1-10 lie on the Cytoplasmic side of the membrane; that stretch reads MLGICRGRRK. The helical; Signal-anchor for type II membrane protein transmembrane segment at 11–31 threads the bilayer; the sequence is FLAASLSLLCIPAITWIYLFS. The Lumenal portion of the chain corresponds to 32–756; it reads GSFEDGKPVS…LKYLTAENNS (725 aa). Disordered regions lie at residues 43 to 69 and 81 to 109; these read SPLE…EVRM and RQLS…EGTG. The segment covering 44–58 has biased composition (polar residues); it reads PLESQAHSPRYTASS. Residues 53 to 95 adopt a coiled-coil conformation; that stretch reads RYTASSQRERESLEVRMREVEEENRALRRQLSLAQGRAPSHRR. The segment covering 59-69 has biased composition (basic and acidic residues); sequence QRERESLEVRM. Residues asparagine 97, asparagine 122, and asparagine 148 are each glycosylated (N-linked (GlcNAc...) asparagine). Positions 138-413 are xylosyltransferase activity; it reads IHVAIVCAGY…FLEYDGNLLR (276 aa). 2 residues coordinate Mn(2+): aspartate 242 and aspartate 244. Residue asparagine 272 is glycosylated (N-linked (GlcNAc...) asparagine). The glucuronyltransferase activity stretch occupies residues 414 to 756; the sequence is RELFGCPSEA…LKYLTAENNS (343 aa). Mn(2+) is bound by residues aspartate 563 and aspartate 565.

It in the C-terminal section; belongs to the glycosyltransferase 49 family. The protein in the N-terminal section; belongs to the glycosyltransferase 8 family. As to quaternary structure, interacts with DAG1 (via the N-terminal domain of alpha-DAG1); the interaction increases binding of DAG1 to laminin. Interacts with B4GAT1. Mn(2+) is required as a cofactor. Ubiquitous. Highest expression in heart, brain and skeletal muscle.

It localises to the golgi apparatus membrane. The catalysed reaction is 3-O-[beta-D-GlcA-(1-&gt;3)-beta-D-Xyl-(1-&gt;4)-Rib-ol-P-Rib-ol-P-3-beta-D-GalNAc-(1-&gt;3)-beta-D-GlcNAc-(1-&gt;4)-(O-6-P-alpha-D-Man)]-Thr-[protein] + UDP-alpha-D-xylose = 3-O-[alpha-D-Xyl-(1-&gt;3)-beta-D-GlcA-(1-&gt;4)-beta-D-Xyl-(1-&gt;4)-Rib-ol-P-Rib-ol-P-3-beta-D-GalNAc-(1-&gt;3)-beta-D-GlcNAc-(1-&gt;4)-(O-6-P-alpha-D-Man)]-Thr-[protein] + UDP + H(+). It carries out the reaction 3-O-{(1-&gt;[3)-alpha-D-Xyl-(1-&gt;3)-beta-D-GlcA-(1-&gt;](n)-4)-beta-D-Xyl-(1-&gt;4)-Rib-ol-P-Rib-ol-P-3-beta-D-GalNAc-(1-&gt;3)-beta-D-GlcNAc-(1-&gt;4)-O-6-P-alpha-D-Man}-L-Thr-[protein] + UDP-alpha-D-glucuronate = 3-O-{beta-D-GlcA-(1-&gt;[3)-alpha-D-Xyl-(1-&gt;3)-beta-D-GlcA-(1-&gt;](n)-4)-beta-D-Xyl-(1-&gt;4)-Rib-ol-P-Rib-ol-P-3-beta-D-GalNAc-(1-&gt;3)-beta-D-GlcNAc-(1-&gt;4)-O-6-P-alpha-D-Man}-L-Thr-[protein] + UDP + H(+). It catalyses the reaction 3-O-{beta-D-GlcA-(1-&gt;[3)-alpha-D-Xyl-(1-&gt;3)-beta-D-GlcA-(1-&gt;](n)-4)-beta-D-Xyl-(1-&gt;4)-Rib-ol-P-Rib-ol-P-3-beta-D-GalNAc-(1-&gt;3)-beta-D-GlcNAc-(1-&gt;4)-O-6-P-alpha-D-Man}-L-Thr-[protein] + UDP-alpha-D-xylose = 3-O-{(1-&gt;[3)-alpha-D-Xyl-(1-&gt;3)-beta-D-GlcA-(1-&gt;](n+1)-4)-beta-D-Xyl-(1-&gt;4)-Rib-ol-P-Rib-ol-P-3-beta-D-GalNAc-(1-&gt;3)-beta-D-GlcNAc-(1-&gt;4)-O-6-P-alpha-D-Man}-L-Thr-[protein] + UDP + H(+). Its pathway is protein modification; protein glycosylation. Bifunctional glycosyltransferase with both alpha-1,3-xylosyltransferase and beta-1,3-glucuronyltransferase activities involved in the maturation of alpha-dystroglycan (DAG1) by glycosylation leading to DAG1 binding to laminin G-like domain-containing extracellular proteins with high affinity. Elongates the glucuronyl-beta-1,4-xylose-beta disaccharide primer structure initiated by B4GAT1 by adding repeating units [-3-Xylose-alpha-1,3-GlcA-beta-1-] to produce a heteropolysaccharide. Requires the phosphorylation of core M3 (O-mannosyl trisaccharide) by POMK to elongate the glucuronyl-beta-1,4-xylose-beta disaccharide primer. Plays a key role in skeletal muscle function and regeneration. The chain is Xylosyl- and glucuronyltransferase LARGE1 from Homo sapiens (Human).